The following is a 182-amino-acid chain: Ribosome-recycling factor (182 aa).

This sequence belongs to the RRF family.

The protein resides in the cytoplasm. In terms of biological role, responsible for the release of ribosomes from messenger RNA at the termination of protein biosynthesis. May increase the efficiency of translation by recycling ribosomes from one round of translation to another. This Gloeobacter violaceus (strain ATCC 29082 / PCC 7421) protein is Ribosome-recycling factor.